A 144-amino-acid chain; its full sequence is F420-non-reducing hydrogenase vhc iron-sulfur subunit D (144 aa).

The protein belongs to the MvhD/VhuD family. As to quaternary structure, the F420-non-reducing hydrogenase vhc is composed of three subunits; VhcA, VhcD and VhcG. It depends on [2Fe-2S] cluster as a cofactor.

The polypeptide is F420-non-reducing hydrogenase vhc iron-sulfur subunit D (vhcD) (Methanococcus voltae).